The sequence spans 218 residues: Small ribosomal subunit protein uS5 (218 aa).

A disordered region spans residues 1–49 (MPGRQRRDGGSGPAGQNGPNTGDNRGGGDRRGGGRDDRRGGQSAEKSNH). Residues 26-49 (GGGDRRGGGRDDRRGGQSAEKSNH) show a composition bias toward basic and acidic residues. In terms of domain architecture, S5 DRBM spans 49–112 (HIERVVTINR…EEARKSFFRV (64 aa)).

It belongs to the universal ribosomal protein uS5 family. Part of the 30S ribosomal subunit. Contacts proteins S4 and S8.

Its function is as follows. With S4 and S12 plays an important role in translational accuracy. Functionally, located at the back of the 30S subunit body where it stabilizes the conformation of the head with respect to the body. The sequence is that of Small ribosomal subunit protein uS5 from Rhodococcus jostii (strain RHA1).